The following is a 354-amino-acid chain: Ornithine cyclodeaminase (354 aa).

Arg53 and Lys77 together coordinate L-ornithine. NAD(+)-binding positions include Thr92, Arg120, 147–148 (AQ), Asp169, Thr209, 232–235 (VGGD), Lys239, and Ser300. Residue Arg120 participates in L-ornithine binding. An L-ornithine-binding site is contributed by Asp235. Catalysis depends on Asp235, which acts as the Proton donor/acceptor. Val301 lines the L-ornithine pocket.

The protein belongs to the ornithine cyclodeaminase/mu-crystallin family. NAD(+) is required as a cofactor.

It catalyses the reaction L-ornithine = L-proline + NH4(+). It functions in the pathway amino-acid biosynthesis; L-proline biosynthesis; L-proline from L-ornithine: step 1/1. With respect to regulation, is subject to substrate inhibition. Is regulated by L-arginine, which stimulates enzymatic activity at 0.1-1 mM while inhibits activity at higher concentrations, and has pronounced effects on the optima for pH and temperature and on the Km for L-ornithine. Is not inhibited by L-proline. In terms of biological role, catalyzes the conversion of L-ornithine into L-proline with release of ammonia. Is involved in the utilization of nopaline, a catabolic pathway that proceeds through L-arginine and L-ornithine to L-proline. Nopaline is a predominant opine in plant cells transformed with Ti plasmid pTiC58. This Agrobacterium fabrum (strain C58 / ATCC 33970) (Agrobacterium tumefaciens (strain C58)) protein is Ornithine cyclodeaminase.